The primary structure comprises 187 residues: Biphenyl 2,3-dioxygenase subunit beta (187 aa).

This sequence belongs to the bacterial ring-hydroxylating dioxygenase beta subunit family. As to quaternary structure, heterohexamer consisting of three BphA1 subunits and three BphA2 subunits. The multicomponent biphenyl dioxygenase system is composed of a ferredoxin reductase (BphA4), a ferredoxin (BphA3), and a terminal oxygenase (BphA1A2).

The enzyme catalyses biphenyl + NADH + O2 + H(+) = (2R,3S)-3-phenylcyclohexa-3,5-diene-1,2-diol + NAD(+). It participates in xenobiotic degradation; biphenyl degradation; 2-hydroxy-2,4-pentadienoate and benzoate from biphenyl: step 1/4. Its function is as follows. Part of the oxygenase component of the biphenyl dioxygenase system that catalyzes the stereospecific dihydroxylation of the aromatic ring of biphenyl, yielding a dihydrodiol compound. Is likely involved in biphenyl degradation that allows growth of Rhodococcus sp. strain RHA1 on biphenyl as the sole source of carbon and energy. Can also use naphtalene and 4-chlorobiphenyl (4-CB) as substrates, as well as some polychlorinated biphenyls (PCB) such as 2,2'-dichlorobiphenyl, 2,3-dichlorobiphenyl and 2,5,2'-trichlorobiphenyl. Exhibits weak activity toward dibenzofuran and dibenzo-p-dioxin. Electrons are transferred from NADH to the [2Fe-2S] cluster in BphA1 via FAD of BphA4 and [2Fe-2S] cluster of BphA3. The chain is Biphenyl 2,3-dioxygenase subunit beta from Rhodococcus jostii (strain RHA1).